Consider the following 369-residue polypeptide: Methionine import ATP-binding protein MetN 2 (369 aa).

The 238-residue stretch at 33 to 270 (VRFIGLGKTY…PRHEVTRTLL (238 aa)) folds into the ABC transporter domain. An ATP-binding site is contributed by 67–74 (GRSGAGKS).

It belongs to the ABC transporter superfamily. Methionine importer (TC 3.A.1.24) family. In terms of assembly, the complex is composed of two ATP-binding proteins (MetN), two transmembrane proteins (MetI) and a solute-binding protein (MetQ).

It is found in the cell inner membrane. The enzyme catalyses L-methionine(out) + ATP + H2O = L-methionine(in) + ADP + phosphate + H(+). It carries out the reaction D-methionine(out) + ATP + H2O = D-methionine(in) + ADP + phosphate + H(+). Part of the ABC transporter complex MetNIQ involved in methionine import. Responsible for energy coupling to the transport system. The chain is Methionine import ATP-binding protein MetN 2 from Pseudomonas putida (strain ATCC 47054 / DSM 6125 / CFBP 8728 / NCIMB 11950 / KT2440).